A 79-amino-acid polypeptide reads, in one-letter code: Probable [Fe-S]-dependent transcriptional repressor (79 aa).

Positions 56, 61, 64, and 71 each coordinate iron-sulfur cluster.

This sequence belongs to the FeoC family.

In terms of biological role, may function as a transcriptional regulator that controls feoABC expression. The chain is Probable [Fe-S]-dependent transcriptional repressor from Klebsiella pneumoniae subsp. pneumoniae (strain ATCC 700721 / MGH 78578).